A 175-amino-acid polypeptide reads, in one-letter code: Interleukin-10 (175 aa).

The first 18 residues, 1 to 18 (MPSSALLYCLIFLAGVAA), serve as a signal peptide directing secretion. Intrachain disulfides connect cysteine 26–cysteine 122 and cysteine 76–cysteine 128. Residue asparagine 130 is glycosylated (N-linked (GlcNAc...) asparagine).

Belongs to the IL-10 family. Homodimer. Interacts with IL10RA and IL10RB.

It is found in the secreted. Its function is as follows. Major immune regulatory cytokine that acts on many cells of the immune system where it has profound anti-inflammatory functions, limiting excessive tissue disruption caused by inflammation. Mechanistically, IL10 binds to its heterotetrameric receptor comprising IL10RA and IL10RB leading to JAK1 and STAT2-mediated phosphorylation of STAT3. In turn, STAT3 translocates to the nucleus where it drives expression of anti-inflammatory mediators. Targets antigen-presenting cells (APCs) such as macrophages and monocytes and inhibits their release of pro-inflammatory cytokines including granulocyte-macrophage colony-stimulating factor /GM-CSF, granulocyte colony-stimulating factor/G-CSF, IL-1 alpha, IL-1 beta, IL-6, IL-8 and TNF-alpha. Also interferes with antigen presentation by reducing the expression of MHC-class II and co-stimulatory molecules, thereby inhibiting their ability to induce T cell activation. In addition, controls the inflammatory response of macrophages by reprogramming essential metabolic pathways including mTOR signaling. The chain is Interleukin-10 (IL10) from Sus scrofa (Pig).